We begin with the raw amino-acid sequence, 492 residues long: Glutamyl-tRNA(Gln) amidotransferase subunit A (492 aa).

Residues lysine 84 and serine 159 each act as charge relay system in the active site. The Acyl-ester intermediate role is filled by serine 183.

Belongs to the amidase family. GatA subfamily. As to quaternary structure, heterotrimer of A, B and C subunits.

It catalyses the reaction L-glutamyl-tRNA(Gln) + L-glutamine + ATP + H2O = L-glutaminyl-tRNA(Gln) + L-glutamate + ADP + phosphate + H(+). Its function is as follows. Allows the formation of correctly charged Gln-tRNA(Gln) through the transamidation of misacylated Glu-tRNA(Gln) in organisms which lack glutaminyl-tRNA synthetase. The reaction takes place in the presence of glutamine and ATP through an activated gamma-phospho-Glu-tRNA(Gln). The polypeptide is Glutamyl-tRNA(Gln) amidotransferase subunit A (Anaeromyxobacter sp. (strain K)).